The primary structure comprises 84 residues: Omega-theraphotoxin-Pm1a (84 aa).

The signal sequence occupies residues Met-1–Ala-21. The propeptide occupies Thr-22–Arg-45. Intrachain disulfides connect Cys-52–Cys-66, Cys-59–Cys-71, and Cys-65–Cys-78.

Belongs to the neurotoxin 10 (Hwtx-1) family. 41 (Jztx-36) subfamily. As to expression, expressed by the venom gland.

Its subcellular location is the secreted. Omega-conotoxins act at presynaptic membranes, they bind and block voltage-gated calcium channels (Cav). This toxin inhibits barium currents (IBa) mediated by L-type voltage-gated calcium channels Cav1.2/CACNA1C (IC(50)=825 nM) and Cav1.3/CACNA1C (IC(50)=2240 nM). This is Omega-theraphotoxin-Pm1a from Pelinobius muticus (King baboon spider).